A 314-amino-acid chain; its full sequence is Serine/threonine-protein phosphatase PP2A-4 catalytic subunit (314 aa).

The Mn(2+) site is built by aspartate 62, histidine 64, aspartate 90, and asparagine 122. Histidine 123 acts as the Proton donor in catalysis. Residues histidine 172 and histidine 246 each coordinate Mn(2+).

This sequence belongs to the PPP phosphatase family. PP-2A subfamily. The cofactor is Mn(2+).

It localises to the cytoplasm. It catalyses the reaction O-phospho-L-seryl-[protein] + H2O = L-seryl-[protein] + phosphate. The enzyme catalyses O-phospho-L-threonyl-[protein] + H2O = L-threonyl-[protein] + phosphate. This Oryza sativa subsp. japonica (Rice) protein is Serine/threonine-protein phosphatase PP2A-4 catalytic subunit (PP2A4).